A 550-amino-acid polypeptide reads, in one-letter code: MRSDSIKKGLERTPHRALLFATGIPKSEMNKPFIGVATSFTDIIPGHISMKELERFIEKGIHTGGGYPFFFGIPGICDGIAMGHKGMKYSLPSRELIADIIECIVEAHQFDGIVLLTNCDKITPGMLMAAARLDIPAIVLTAGPMLAGYYKGQRRNLTSDTFEAIGKFKKGVLTEKDLEALELCACPGAGSCQGMYTANTMACVTEALGMSLPGTAATPAVMSEKRRLAFETGVKIVELVRKKINARQILTKEAFYNAIAVDMALGGSTNTVLHIKAIANEAGINLPLEVFDEISRKTPHLVNIIPSGEHYMEDLYKAGGIPAVLKRLKDKIYSNPTVSGIDIKEIAQKAEIYDENVIRSIKKAYHKEGGVAILKGNLAPDGAVVKQTAVSSKMLKFEGIARCFDSEENAMKAILDGKIKEGDVIIIRYEGPSGGPGMREMLSPTSAITGMGLNESVALITDGRFSGGTRGPCIGHVSPEAARGGPIAIVKDGDKILIDIPKRKIEILISESEIKKRLKNWKPPKQKIEKGYLLRYARNVSSADKGAILE.

Asp-78 lines the Mg(2+) pocket. Cys-119 contacts [2Fe-2S] cluster. Mg(2+) contacts are provided by Asp-120 and Lys-121. At Lys-121 the chain carries N6-carboxylysine. Residue Cys-192 coordinates [2Fe-2S] cluster. Position 440 (Glu-440) interacts with Mg(2+). Ser-466 (proton acceptor) is an active-site residue.

The protein belongs to the IlvD/Edd family. As to quaternary structure, homodimer. It depends on [2Fe-2S] cluster as a cofactor. Mg(2+) is required as a cofactor.

It carries out the reaction (2R)-2,3-dihydroxy-3-methylbutanoate = 3-methyl-2-oxobutanoate + H2O. It catalyses the reaction (2R,3R)-2,3-dihydroxy-3-methylpentanoate = (S)-3-methyl-2-oxopentanoate + H2O. Its pathway is amino-acid biosynthesis; L-isoleucine biosynthesis; L-isoleucine from 2-oxobutanoate: step 3/4. It participates in amino-acid biosynthesis; L-valine biosynthesis; L-valine from pyruvate: step 3/4. Its function is as follows. Functions in the biosynthesis of branched-chain amino acids. Catalyzes the dehydration of (2R,3R)-2,3-dihydroxy-3-methylpentanoate (2,3-dihydroxy-3-methylvalerate) into 2-oxo-3-methylpentanoate (2-oxo-3-methylvalerate) and of (2R)-2,3-dihydroxy-3-methylbutanoate (2,3-dihydroxyisovalerate) into 2-oxo-3-methylbutanoate (2-oxoisovalerate), the penultimate precursor to L-isoleucine and L-valine, respectively. The protein is Dihydroxy-acid dehydratase of Thermodesulfovibrio yellowstonii (strain ATCC 51303 / DSM 11347 / YP87).